Consider the following 223-residue polypeptide: Endonuclease V (223 aa).

Positions 45 and 113 each coordinate Mg(2+).

Belongs to the endonuclease V family. Mg(2+) serves as cofactor.

The protein resides in the cytoplasm. The enzyme catalyses Endonucleolytic cleavage at apurinic or apyrimidinic sites to products with a 5'-phosphate.. Functionally, DNA repair enzyme involved in the repair of deaminated bases. Selectively cleaves double-stranded DNA at the second phosphodiester bond 3' to a deoxyinosine leaving behind the intact lesion on the nicked DNA. The sequence is that of Endonuclease V from Dehalococcoides mccartyi (strain CBDB1).